Here is a 162-residue protein sequence, read N- to C-terminus: uncharacterized protein (162 aa).

This is an uncharacterized protein from Picosynechococcus sp. (strain ATCC 27264 / PCC 7002 / PR-6) (Agmenellum quadruplicatum).